Here is a 493-residue protein sequence, read N- to C-terminus: Guanosine-5'-triphosphate,3'-diphosphate pyrophosphatase (493 aa).

It belongs to the GppA/Ppx family. GppA subfamily.

The catalysed reaction is guanosine 3'-diphosphate 5'-triphosphate + H2O = guanosine 3',5'-bis(diphosphate) + phosphate + H(+). The protein operates within purine metabolism; ppGpp biosynthesis; ppGpp from GTP: step 2/2. Functionally, catalyzes the conversion of pppGpp to ppGpp. Guanosine pentaphosphate (pppGpp) is a cytoplasmic signaling molecule which together with ppGpp controls the 'stringent response', an adaptive process that allows bacteria to respond to amino acid starvation, resulting in the coordinated regulation of numerous cellular activities. In Salmonella heidelberg (strain SL476), this protein is Guanosine-5'-triphosphate,3'-diphosphate pyrophosphatase.